The sequence spans 2531 residues: Putative neurobeachin homolog (2531 aa).

Acidic residues-rich tracts occupy residues 1 to 10 (MDISETEYND), 26 to 35 (EDEVNDEESN), and 62 to 74 (EPSD…EESE). 4 disordered regions span residues 1–101 (MDIS…SPPP), 1363–1398 (NDGD…DNGG), 1420–1440 (EELK…MPPQ), and 1642–1670 (RFVP…EISE). Positions 1363 to 1379 (NDGDHASIKNGSDHSEN) are enriched in basic and acidic residues. A compositionally biased stretch (polar residues) spans 1427 to 1440 (QSNGRRPSTLMPPQ). Positions 1650–1670 (SRHEEANLPEGEKNEEPEISE) are enriched in basic and acidic residues. In terms of domain architecture, BEACH-type PH spans 1714–1822 (PSSQSACFST…TVRKVVYQLP (109 aa)). Positions 1841-2130 (MTPRQLFKHS…QLLAEAHPPR (290 aa)) constitute a BEACH domain. WD repeat units follow at residues 2289–2332 (GHGD…GFIA), 2350–2389 (GHEA…LRRI), 2429–2468 (LSEE…KLYT), and 2471–2510 (PLNS…WHYE).

The protein belongs to the WD repeat neurobeachin family. As to quaternary structure, interacts with RII subunit of PKA.

It is found in the cytoplasm. Its subcellular location is the membrane. It localises to the nucleus. Functionally, binds to type II regulatory subunits of protein kinase A and anchors/targets them to the membrane. May anchor the kinase to cytoskeletal and/or organelle-associated proteins. Regulates endosomal traffic in polarized epithelial cells such as the vulval precursor cells and intestinal cells. Thought to act as a negative regulator of lin-12 activity in vulval precursor cells. May have a role in the internalization process from basolateral surface of polarized epithelial cells. This chain is Putative neurobeachin homolog, found in Caenorhabditis briggsae.